The following is a 339-amino-acid chain: Serine/threonine-protein kinase pdik1l-A (339 aa).

The region spanning Tyr-8–Phe-332 is the Protein kinase domain. Residues Val-14 to Val-22 and Lys-37 each bind ATP. The active-site Proton acceptor is Asp-164.

The protein belongs to the protein kinase superfamily. Ser/Thr protein kinase family.

It localises to the nucleus. The enzyme catalyses L-seryl-[protein] + ATP = O-phospho-L-seryl-[protein] + ADP + H(+). The catalysed reaction is L-threonyl-[protein] + ATP = O-phospho-L-threonyl-[protein] + ADP + H(+). This chain is Serine/threonine-protein kinase pdik1l-A (pdik1-a), found in Xenopus laevis (African clawed frog).